Consider the following 808-residue polypeptide: DNA replication licensing factor MCM3 (808 aa).

At Ala-2 the chain carries N-acetylalanine. Phosphoserine is present on residues Ser-160 and Ser-275. Lys-293 carries the post-translational modification N6-acetyllysine. Positions 295–502 constitute an MCM domain; the sequence is IFDQLARSLA…QDREISDHVL (208 aa). ADP is bound by residues Gln-353, Leu-393, Glu-394, Ala-395, and Ala-397. The short motif at 477 to 480 is the Arginine finger element; sequence SRFD. Ala-523 contacts ATP. A Phosphoserine; by ATM modification is found at Ser-535. N6-acetyllysine is present on Lys-547. Position 611 is a phosphoserine (Ser-611). The interval 662 to 738 is disordered; it reads KKRKKRSEDE…QETKESQKVE (77 aa). Arg-664 lines the ATP pocket. 2 positions are modified to phosphoserine: Ser-668 and Ser-672. 2 stretches are compositionally biased toward acidic residues: residues 670 to 681 and 704 to 717; these read DESETEDEEEKS and SYDPYDFSDTEEEM. Thr-674 carries the phosphothreonine modification. Ser-681 carries the phosphoserine modification. Tyr-708 is modified (phosphotyrosine). Position 711 is a phosphoserine (Ser-711). Residues Thr-713, Thr-722, and Thr-725 each carry the phosphothreonine modification. Over residues 727–738 the composition is skewed to basic and acidic residues; sequence DSQETKESQKVE. Ser-728 and Ser-734 each carry phosphoserine.

It belongs to the MCM family. As to quaternary structure, component of the MCM2-7 complex. The complex forms a toroidal hexameric ring with the proposed subunit order MCM2-MCM6-MCM4-MCM7-MCM3-MCM5. Component of the CMG helicase complex, a hexameric ring of related MCM2-7 subunits stabilized by CDC45 and the tetrameric GINS complex. Associated with the replication-specific DNA polymerase alpha. Interacts with MCMBP. Interacts with ANKRD17. Interacts with MCM3AP isoform MCM3AP; this interaction leads to MCM3 acetylation. In terms of processing, acetylated by MCM3AP. Post-translationally, O-glycosylated (O-GlcNAcylated), in a cell cycle-dependent manner.

Its subcellular location is the nucleus. The protein localises to the chromosome. It carries out the reaction ATP + H2O = ADP + phosphate + H(+). Functionally, acts as a component of the MCM2-7 complex (MCM complex) which is the replicative helicase essential for 'once per cell cycle' DNA replication initiation and elongation in eukaryotic cells. Core component of CDC45-MCM-GINS (CMG) helicase, the molecular machine that unwinds template DNA during replication, and around which the replisome is built. The active ATPase sites in the MCM2-7 ring are formed through the interaction surfaces of two neighboring subunits such that a critical structure of a conserved arginine finger motif is provided in trans relative to the ATP-binding site of the Walker A box of the adjacent subunit. The six ATPase active sites, however, are likely to contribute differentially to the complex helicase activity. Required for the entry in S phase and for cell division. The polypeptide is DNA replication licensing factor MCM3 (MCM3) (Pongo abelii (Sumatran orangutan)).